Reading from the N-terminus, the 98-residue chain is NADH-ubiquinone oxidoreductase chain 4L (98 aa).

Transmembrane regions (helical) follow at residues 1–21, 26–46, and 59–79; these read MTHI…GLTF, LLSA…ALAM, and APLL…SLLV.

The protein belongs to the complex I subunit 4L family.

It is found in the mitochondrion membrane. The catalysed reaction is a ubiquinone + NADH + 5 H(+)(in) = a ubiquinol + NAD(+) + 4 H(+)(out). In terms of biological role, core subunit of the mitochondrial membrane respiratory chain NADH dehydrogenase (Complex I) which catalyzes electron transfer from NADH through the respiratory chain, using ubiquinone as an electron acceptor. Part of the enzyme membrane arm which is embedded in the lipid bilayer and involved in proton translocation. This is NADH-ubiquinone oxidoreductase chain 4L (MT-ND4L) from Polypterus ornatipinnis (Ornate bichir).